The following is a 138-amino-acid chain: Large ribosomal subunit protein uL16 (138 aa).

The segment covering 1-17 (MLIPRKVKHRKQHHPRQ) has biased composition (basic residues). Residues 1-22 (MLIPRKVKHRKQHHPRQRGIAS) form a disordered region.

This sequence belongs to the universal ribosomal protein uL16 family. As to quaternary structure, part of the 50S ribosomal subunit.

In terms of biological role, binds 23S rRNA and is also seen to make contacts with the A and possibly P site tRNAs. The polypeptide is Large ribosomal subunit protein uL16 (Mycobacterium tuberculosis (strain ATCC 25177 / H37Ra)).